The chain runs to 64 residues: Potassium channel toxin kappa-KTx 3.1 (64 aa).

The N-terminal stretch at 1–26 is a signal peptide; the sequence is MKSTLMTASVLILVLLSIVDYASVYA. Residues 27–36 constitute a propeptide that is removed on maturation; that stretch reads EFIDSEISLE. Cystine bridges form between C43–C61 and C47–C57.

This sequence belongs to the short scorpion toxin superfamily. Potassium channel inhibitor kappa-KTx family. Kappa-KTx 3 subfamily. As to expression, expressed by the venom gland.

It is found in the secreted. Functionally, potassium channel inhibitor (Kv). The polypeptide is Potassium channel toxin kappa-KTx 3.1 (Heterometrus petersii (Asian forest scorpion)).